Reading from the N-terminus, the 357-residue chain is Homoserine kinase (357 aa).

It belongs to the GHMP kinase family. Homoserine kinase subfamily.

The enzyme catalyses L-homoserine + ATP = O-phospho-L-homoserine + ADP + H(+). It functions in the pathway amino-acid biosynthesis; L-threonine biosynthesis; L-threonine from L-aspartate: step 4/5. In terms of biological role, commits homoserine to the threonine biosynthesis pathway by catalyzing its O-phosphorylation. The polypeptide is Homoserine kinase (Cryptococcus neoformans var. grubii serotype A (strain H99 / ATCC 208821 / CBS 10515 / FGSC 9487) (Filobasidiella neoformans var. grubii)).